The primary structure comprises 133 residues: Sigma factor-binding protein Crl (133 aa).

The tract at residues 99 to 122 (TLDDFYVKLTKFVKEDCQLDLQAS) is essential for activity.

This sequence belongs to the Crl family.

The protein localises to the cytoplasm. Its function is as follows. Binds to the sigma-S subunit of RNA polymerase, activating expression of sigma-S-regulated genes. Stimulates RNA polymerase holoenzyme formation and may bind to several other sigma factors, such as sigma-70 and sigma-32. This chain is Sigma factor-binding protein Crl, found in Photobacterium profundum (strain SS9).